The chain runs to 199 residues: 7-methyl-GTP pyrophosphatase (199 aa).

Asp-76 serves as the catalytic Proton acceptor.

Belongs to the Maf family. YceF subfamily. The cofactor is a divalent metal cation.

The protein resides in the cytoplasm. The catalysed reaction is N(7)-methyl-GTP + H2O = N(7)-methyl-GMP + diphosphate + H(+). Its function is as follows. Nucleoside triphosphate pyrophosphatase that hydrolyzes 7-methyl-GTP (m(7)GTP). May have a dual role in cell division arrest and in preventing the incorporation of modified nucleotides into cellular nucleic acids. The protein is 7-methyl-GTP pyrophosphatase of Hahella chejuensis (strain KCTC 2396).